The following is a 360-amino-acid chain: Mannose-1-phosphate guanyltransferase beta-A (360 aa).

This sequence belongs to the transferase hexapeptide repeat family.

The catalysed reaction is alpha-D-mannose 1-phosphate + GTP + H(+) = GDP-alpha-D-mannose + diphosphate. Its pathway is nucleotide-sugar biosynthesis; GDP-alpha-D-mannose biosynthesis; GDP-alpha-D-mannose from alpha-D-mannose 1-phosphate (GTP route): step 1/1. The sequence is that of Mannose-1-phosphate guanyltransferase beta-A (gmppb-a) from Xenopus laevis (African clawed frog).